Here is a 207-residue protein sequence, read N- to C-terminus: Large ribosomal subunit protein uL4 (207 aa).

The tract at residues 48-78 (THKVKTRSEVRGGGRKPWRQKGTGRARQGSI) is disordered. A compositionally biased stretch (basic residues) spans 60–71 (GGRKPWRQKGTG).

The protein belongs to the universal ribosomal protein uL4 family. Part of the 50S ribosomal subunit.

One of the primary rRNA binding proteins, this protein initially binds near the 5'-end of the 23S rRNA. It is important during the early stages of 50S assembly. It makes multiple contacts with different domains of the 23S rRNA in the assembled 50S subunit and ribosome. Its function is as follows. Forms part of the polypeptide exit tunnel. This chain is Large ribosomal subunit protein uL4, found in Bacillus pumilus (strain SAFR-032).